A 183-amino-acid chain; its full sequence is Adenine phosphoribosyltransferase (183 aa).

It belongs to the purine/pyrimidine phosphoribosyltransferase family. In terms of assembly, homodimer.

It is found in the cytoplasm. It catalyses the reaction AMP + diphosphate = 5-phospho-alpha-D-ribose 1-diphosphate + adenine. Its pathway is purine metabolism; AMP biosynthesis via salvage pathway; AMP from adenine: step 1/1. Functionally, catalyzes a salvage reaction resulting in the formation of AMP, that is energically less costly than de novo synthesis. This is Adenine phosphoribosyltransferase from Shewanella sp. (strain ANA-3).